We begin with the raw amino-acid sequence, 384 residues long: 23S rRNA (uracil(747)-C(5))-methyltransferase RlmC (384 aa).

[4Fe-4S] cluster is bound by residues C7, C15, C18, and C94. Residues Q219, F248, E269, and N316 each contribute to the S-adenosyl-L-methionine site. C343 (nucleophile) is an active-site residue.

The protein belongs to the class I-like SAM-binding methyltransferase superfamily. RNA M5U methyltransferase family. RlmC subfamily.

The enzyme catalyses uridine(747) in 23S rRNA + S-adenosyl-L-methionine = 5-methyluridine(747) in 23S rRNA + S-adenosyl-L-homocysteine + H(+). Its function is as follows. Catalyzes the formation of 5-methyl-uridine at position 747 (m5U747) in 23S rRNA. This Shewanella sp. (strain MR-4) protein is 23S rRNA (uracil(747)-C(5))-methyltransferase RlmC.